The primary structure comprises 257 residues: Acetylglutamate kinase (257 aa).

Substrate contacts are provided by residues 41-42 (GG), R63, and N158.

The protein belongs to the acetylglutamate kinase family. ArgB subfamily.

The protein localises to the cytoplasm. It carries out the reaction N-acetyl-L-glutamate + ATP = N-acetyl-L-glutamyl 5-phosphate + ADP. The protein operates within amino-acid biosynthesis; L-arginine biosynthesis; N(2)-acetyl-L-ornithine from L-glutamate: step 2/4. Functionally, catalyzes the ATP-dependent phosphorylation of N-acetyl-L-glutamate. This is Acetylglutamate kinase from Phocaeicola vulgatus (strain ATCC 8482 / DSM 1447 / JCM 5826 / CCUG 4940 / NBRC 14291 / NCTC 11154) (Bacteroides vulgatus).